Consider the following 668-residue polypeptide: Chitin synthase 8 (668 aa).

The span at 1–26 (MTSRMPTSGHRTSSSSSERGNMSVQQ) shows a compositional bias: polar residues. The disordered stretch occupies residues 1–62 (MTSRMPTSGH…PAPLRPGWTL (62 aa)). Asn21, Asn98, and Asn101 each carry an N-linked (GlcNAc...) asparagine glycan. The next 2 helical transmembrane spans lie at 136-156 (WSLI…GWKY) and 162-182 (FFLV…ICII). Residues Asn216 and Asn476 are each glycosylated (N-linked (GlcNAc...) asparagine). The next 4 helical transmembrane spans lie at 522-542 (WALG…IILI), 548-568 (LIAV…VELL), 583-603 (VFLG…CIGF), and 615-635 (YFAG…IILV).

It belongs to the chitin synthase family. Class VIII subfamily.

It localises to the cell membrane. The protein resides in the cell septum. The catalysed reaction is [(1-&gt;4)-N-acetyl-beta-D-glucosaminyl](n) + UDP-N-acetyl-alpha-D-glucosamine = [(1-&gt;4)-N-acetyl-beta-D-glucosaminyl](n+1) + UDP + H(+). Its function is as follows. Polymerizes chitin, a structural polymer of the cell wall and septum, by transferring the sugar moiety of UDP-GlcNAc to the non-reducing end of the growing chitin polymer. Participated in the development of cell wall and plays a critical role in fungal response to environmental stresses. Necessary for pathogenicity and deoxinivalenol (DON) production. This is Chitin synthase 8 from Gibberella zeae (strain ATCC MYA-4620 / CBS 123657 / FGSC 9075 / NRRL 31084 / PH-1) (Wheat head blight fungus).